The following is a 101-amino-acid chain: Small ribosomal subunit protein uS14 (101 aa).

Belongs to the universal ribosomal protein uS14 family. Part of the 30S ribosomal subunit. Contacts proteins S3 and S10.

Binds 16S rRNA, required for the assembly of 30S particles and may also be responsible for determining the conformation of the 16S rRNA at the A site. This Maricaulis maris (strain MCS10) (Caulobacter maris) protein is Small ribosomal subunit protein uS14.